We begin with the raw amino-acid sequence, 560 residues long: Dihydroxy-acid dehydratase (560 aa).

Residues 1 to 20 (MGDNLKKRSSMTTDGDNRAP) are disordered. [2Fe-2S] cluster is bound at residue Cys52. Residue Asp84 coordinates Mg(2+). Cys125 contributes to the [2Fe-2S] cluster binding site. Asp126 and Lys127 together coordinate Mg(2+). Position 127 is an N6-carboxylysine (Lys127). Residue Cys197 participates in [2Fe-2S] cluster binding. Glu448 lines the Mg(2+) pocket. Ser474 serves as the catalytic Proton acceptor.

It belongs to the IlvD/Edd family. Homodimer. The cofactor is [2Fe-2S] cluster. Requires Mg(2+) as cofactor.

The enzyme catalyses (2R)-2,3-dihydroxy-3-methylbutanoate = 3-methyl-2-oxobutanoate + H2O. It carries out the reaction (2R,3R)-2,3-dihydroxy-3-methylpentanoate = (S)-3-methyl-2-oxopentanoate + H2O. It functions in the pathway amino-acid biosynthesis; L-isoleucine biosynthesis; L-isoleucine from 2-oxobutanoate: step 3/4. The protein operates within amino-acid biosynthesis; L-valine biosynthesis; L-valine from pyruvate: step 3/4. In terms of biological role, functions in the biosynthesis of branched-chain amino acids. Catalyzes the dehydration of (2R,3R)-2,3-dihydroxy-3-methylpentanoate (2,3-dihydroxy-3-methylvalerate) into 2-oxo-3-methylpentanoate (2-oxo-3-methylvalerate) and of (2R)-2,3-dihydroxy-3-methylbutanoate (2,3-dihydroxyisovalerate) into 2-oxo-3-methylbutanoate (2-oxoisovalerate), the penultimate precursor to L-isoleucine and L-valine, respectively. This is Dihydroxy-acid dehydratase from Leptospira interrogans serogroup Icterohaemorrhagiae serovar copenhageni (strain Fiocruz L1-130).